Consider the following 435-residue polypeptide: Adenylosuccinate synthetase (435 aa).

GTP contacts are provided by residues 22–28 (GDEGKGK) and 50–52 (GHT). D23 (proton acceptor) is an active-site residue. Mg(2+) is bound by residues D23 and G50. Residues 23–26 (DEGK), 48–51 (NAGH), T140, R154, Q235, T250, and R314 contribute to the IMP site. Catalysis depends on H51, which acts as the Proton donor. Residue 310–316 (ATTGRKR) participates in substrate binding. GTP-binding positions include R316, 342–344 (KLD), and 424–426 (SVG).

It belongs to the adenylosuccinate synthetase family. Homodimer. Requires Mg(2+) as cofactor.

Its subcellular location is the cytoplasm. The catalysed reaction is IMP + L-aspartate + GTP = N(6)-(1,2-dicarboxyethyl)-AMP + GDP + phosphate + 2 H(+). Its pathway is purine metabolism; AMP biosynthesis via de novo pathway; AMP from IMP: step 1/2. Functionally, plays an important role in the de novo pathway of purine nucleotide biosynthesis. Catalyzes the first committed step in the biosynthesis of AMP from IMP. In Chlorobaculum tepidum (strain ATCC 49652 / DSM 12025 / NBRC 103806 / TLS) (Chlorobium tepidum), this protein is Adenylosuccinate synthetase.